The following is a 514-amino-acid chain: Putative fumarate hydratase class I (514 aa).

Cysteine 62, cysteine 187, and cysteine 274 together coordinate [4Fe-4S] cluster.

It belongs to the class-I fumarase family. As to quaternary structure, homodimer. [4Fe-4S] cluster serves as cofactor.

It carries out the reaction (S)-malate = fumarate + H2O. It participates in carbohydrate metabolism; tricarboxylic acid cycle; (S)-malate from fumarate: step 1/1. Catalyzes the reversible hydration of fumarate to (S)-malate. The sequence is that of Putative fumarate hydratase class I (fumA) from Geobacillus stearothermophilus (Bacillus stearothermophilus).